A 427-amino-acid polypeptide reads, in one-letter code: Citrate synthase (427 aa).

Active-site residues include H306 and D363.

The protein belongs to the citrate synthase family. As to quaternary structure, homohexamer.

The enzyme catalyses oxaloacetate + acetyl-CoA + H2O = citrate + CoA + H(+). It participates in carbohydrate metabolism; tricarboxylic acid cycle; isocitrate from oxaloacetate: step 1/2. Its activity is regulated as follows. Allosterically inhibited by NADH. This chain is Citrate synthase (gltA), found in Salmonella typhimurium (strain LT2 / SGSC1412 / ATCC 700720).